We begin with the raw amino-acid sequence, 238 residues long: Uridylate kinase (238 aa).

12–15 (KLSG) is a binding site for ATP. The segment at 20 to 25 (GQQGFG) is involved in allosteric activation by GTP. Position 54 (G54) interacts with UMP. 2 residues coordinate ATP: G55 and R59. UMP contacts are provided by residues D74 and 135-142 (TGNPFFTT). The ATP site is built by T162, N163, Y168, and D171.

This sequence belongs to the UMP kinase family. As to quaternary structure, homohexamer.

It localises to the cytoplasm. It catalyses the reaction UMP + ATP = UDP + ADP. Its pathway is pyrimidine metabolism; CTP biosynthesis via de novo pathway; UDP from UMP (UMPK route): step 1/1. Allosterically activated by GTP. Inhibited by UTP. Catalyzes the reversible phosphorylation of UMP to UDP. In Bradyrhizobium diazoefficiens (strain JCM 10833 / BCRC 13528 / IAM 13628 / NBRC 14792 / USDA 110), this protein is Uridylate kinase.